The primary structure comprises 306 residues: 4-diphosphocytidyl-2-C-methyl-D-erythritol kinase (306 aa).

Residue Lys11 is part of the active site. 98–108 (PIAGGMGGGSA) serves as a coordination point for ATP. The active site involves Asp140.

This sequence belongs to the GHMP kinase family. IspE subfamily.

It catalyses the reaction 4-CDP-2-C-methyl-D-erythritol + ATP = 4-CDP-2-C-methyl-D-erythritol 2-phosphate + ADP + H(+). The protein operates within isoprenoid biosynthesis; isopentenyl diphosphate biosynthesis via DXP pathway; isopentenyl diphosphate from 1-deoxy-D-xylulose 5-phosphate: step 3/6. Catalyzes the phosphorylation of the position 2 hydroxy group of 4-diphosphocytidyl-2C-methyl-D-erythritol. In Leifsonia xyli subsp. xyli (strain CTCB07), this protein is 4-diphosphocytidyl-2-C-methyl-D-erythritol kinase.